The primary structure comprises 540 residues: 2-isopropylmalate synthase (540 aa).

In terms of domain architecture, Pyruvate carboxyltransferase spans 8–269; it reads VLIFDTTLRD…YFNPFFGREP (262 aa). Residues D17, H208, H210, and N244 each contribute to the Mn(2+) site. A regulatory domain region spans residues 408–540; the sequence is QLRLVQVSCG…AVLADLRSGI (133 aa).

Belongs to the alpha-IPM synthase/homocitrate synthase family. LeuA type 1 subfamily. In terms of assembly, homodimer. It depends on Mn(2+) as a cofactor.

Its subcellular location is the cytoplasm. The catalysed reaction is 3-methyl-2-oxobutanoate + acetyl-CoA + H2O = (2S)-2-isopropylmalate + CoA + H(+). It participates in amino-acid biosynthesis; L-leucine biosynthesis; L-leucine from 3-methyl-2-oxobutanoate: step 1/4. Functionally, catalyzes the condensation of the acetyl group of acetyl-CoA with 3-methyl-2-oxobutanoate (2-ketoisovalerate) to form 3-carboxy-3-hydroxy-4-methylpentanoate (2-isopropylmalate). The polypeptide is 2-isopropylmalate synthase (Prochlorococcus marinus (strain MIT 9313)).